Reading from the N-terminus, the 332-residue chain is 3-ketodihydrosphingosine reductase (332 aa).

The N-terminal stretch at Met1 to Pro25 is a signal peptide. The Cytoplasmic segment spans residues Lys26–Asp270. Residues Gly39, Ser41, Ser42, Gly43, Arg64, Lys68, and Asp93 each coordinate NADPH. Residues Gly39 to Gly43 carry the GXSXG motif. The active-site Proton donor is Ser172. The active-site Proton acceptor is the Tyr186. Tyr186 and Lys190 together coordinate NADP(+). Lys190 acts as the Lowers pKa of active site Tyr in catalysis. Residues Gly271–Leu291 form a helical membrane-spanning segment. The Lumenal portion of the chain corresponds to Gln292 to Gln293. The chain crosses the membrane as a helical span at residues Val294–Ile314. Over Val315–Ala332 the chain is Cytoplasmic.

Belongs to the short-chain dehydrogenases/reductases (SDR) family.

The protein localises to the endoplasmic reticulum membrane. The catalysed reaction is sphinganine + NADP(+) = 3-oxosphinganine + NADPH + H(+). Its pathway is lipid metabolism; sphingolipid metabolism. In terms of biological role, catalyzes the reduction of 3'-oxosphinganine (3-ketodihydrosphingosine/KDS) to sphinganine (dihydrosphingosine/DHS), the second step of de novo sphingolipid biosynthesis. The polypeptide is 3-ketodihydrosphingosine reductase (Kdsr) (Mus musculus (Mouse)).